The chain runs to 112 residues: UPF0342 protein SGO_1370 (112 aa).

Belongs to the UPF0342 family.

This chain is UPF0342 protein SGO_1370, found in Streptococcus gordonii (strain Challis / ATCC 35105 / BCRC 15272 / CH1 / DL1 / V288).